Here is a 127-residue protein sequence, read N- to C-terminus: Protein NEGATIVE REGULATOR OF RESISTANCE (127 aa).

Disordered regions lie at residues 1–28 (MDATTTAKRKRPAASDIADDAPTTVDEV) and 47–127 (TRRL…RAPA). Over residues 112–127 (PPSDAPATPRSARAPA) the composition is skewed to low complexity.

It belongs to the NPR1-interactor family. In terms of assembly, interacts with NPR1/NH1. Interacts with NPR3/NH3.

It is found in the nucleus. In terms of biological role, acts as a negative regulator of disease resistance. Acts on basal resistance, age-related resistance and resistance mediated by the LRR receptor kinase XA21. Plants over-expressing NRR display enhanced susceptibility to the bacterial blight Xanthomonas oryzae pv. oryzae (Xoo). Binds to and represses NPR1/NH1-mediated transcriptional activation of LG2 in vitro. This chain is Protein NEGATIVE REGULATOR OF RESISTANCE, found in Oryza sativa subsp. japonica (Rice).